A 372-amino-acid chain; its full sequence is Putative glutamate--cysteine ligase 2 (372 aa).

It belongs to the glutamate--cysteine ligase type 2 family. YbdK subfamily.

The catalysed reaction is L-cysteine + L-glutamate + ATP = gamma-L-glutamyl-L-cysteine + ADP + phosphate + H(+). In terms of biological role, ATP-dependent carboxylate-amine ligase which exhibits weak glutamate--cysteine ligase activity. The sequence is that of Putative glutamate--cysteine ligase 2 from Gloeobacter violaceus (strain ATCC 29082 / PCC 7421).